Reading from the N-terminus, the 441-residue chain is Ribulose bisphosphate carboxylase large chain (441 aa).

Substrate-binding residues include asparagine 89 and threonine 139. The Proton acceptor role is filled by lysine 141. Lysine 143 serves as a coordination point for substrate. Lysine 167, aspartate 169, and glutamate 170 together coordinate Mg(2+). Residue lysine 167 is modified to N6-carboxylysine. Residue histidine 260 is the Proton acceptor of the active site. Substrate contacts are provided by arginine 261, histidine 293, and serine 345.

Belongs to the RuBisCO large chain family. Type I subfamily. Heterohexadecamer of 8 large chains and 8 small chains; disulfide-linked. The disulfide link is formed within the large subunit homodimers. It depends on Mg(2+) as a cofactor. Post-translationally, the disulfide bond which can form in the large chain dimeric partners within the hexadecamer appears to be associated with oxidative stress and protein turnover.

It is found in the plastid. Its subcellular location is the chloroplast. It catalyses the reaction 2 (2R)-3-phosphoglycerate + 2 H(+) = D-ribulose 1,5-bisphosphate + CO2 + H2O. The enzyme catalyses D-ribulose 1,5-bisphosphate + O2 = 2-phosphoglycolate + (2R)-3-phosphoglycerate + 2 H(+). RuBisCO catalyzes two reactions: the carboxylation of D-ribulose 1,5-bisphosphate, the primary event in carbon dioxide fixation, as well as the oxidative fragmentation of the pentose substrate in the photorespiration process. Both reactions occur simultaneously and in competition at the same active site. This is Ribulose bisphosphate carboxylase large chain from Fouquieria splendens (Ocotillo).